The primary structure comprises 349 residues: Rhodopsin (349 aa).

Residues 1–33 lie on the Extracellular side of the membrane; it reads TEGPYFYIPMSNATGIVRSPYEYPQYYLVYPAA. An N-linked (GlcNAc...) asparagine glycan is attached at asparagine 12. A helical transmembrane segment spans residues 34 to 58; it reads YAVLGAYMFFLIIFGFPVNFLTLYV. At 59 to 70 the chain is on the cytoplasmic side; the sequence is TIEHKKLRTPLN. A helical transmembrane segment spans residues 71–93; that stretch reads YILLNLAVADLFMVIGGFTTTIY. Residues 94–107 lie on the Extracellular side of the membrane; it reads TSMHGYFVLGRLGC. Residues cysteine 107 and cysteine 184 are joined by a disulfide bond. Residues 108 to 130 form a helical membrane-spanning segment; that stretch reads NLEGFSATLGGMIGLWSLVVLAI. The short motif at 131–133 is the 'Ionic lock' involved in activated form stabilization element; it reads ERW. Residues 131 to 149 are Cytoplasmic-facing; sequence ERWVVVCKPMSNFRFGENH. The chain crosses the membrane as a helical span at residues 150-170; sequence AIMGVTLTWVMGLACTVPPLV. The Extracellular segment spans residues 171–199; it reads GWSRYIPEGMQCSCGIDYYTRAEGFNNDS. N-linked (GlcNAc...) asparagine glycosylation is present at asparagine 197. Residues 200–221 traverse the membrane as a helical segment; sequence YVLYMFVCHFLIPLVVIFFCYG. Residues 222–249 lie on the Cytoplasmic side of the membrane; sequence RLLCAVKEAAAAQQESETTQRAEREVTR. Residues 250-271 traverse the membrane as a helical segment; sequence MVILMVIGFLVCWLPYASVAWY. The Extracellular portion of the chain corresponds to 272–283; it reads IFTHQGSEFGPL. The helical transmembrane segment at 284–305 threads the bilayer; that stretch reads FMTIPAFFAKSSSIYNPVIYIC. N6-(retinylidene)lysine is present on lysine 293. The Cytoplasmic segment spans residues 306-349; sequence MNKQFRQCMLTTLFCGKNPFEEEEGASSTKTEASSASSSSVSPA. The S-palmitoyl cysteine moiety is linked to residue cysteine 320. A disordered region spans residues 326 to 349; sequence EEEEGASSTKTEASSASSSSVSPA. Positions 331 to 349 are enriched in low complexity; that stretch reads ASSTKTEASSASSSSVSPA.

This sequence belongs to the G-protein coupled receptor 1 family. Opsin subfamily. Phosphorylated on some or all of the serine and threonine residues present in the C-terminal region. In terms of processing, contains one covalently linked retinal chromophore.

The protein localises to the membrane. It localises to the cell projection. The protein resides in the cilium. It is found in the photoreceptor outer segment. In terms of biological role, photoreceptor required for image-forming vision at low light intensity. While most salt water fish species use retinal as chromophore, most freshwater fish use 3-dehydroretinal, or a mixture of retinal and 3-dehydroretinal. Light-induced isomerization of 11-cis to all-trans retinal triggers a conformational change that activates signaling via G-proteins. Subsequent receptor phosphorylation mediates displacement of the bound G-protein alpha subunit by arrestin and terminates signaling. The polypeptide is Rhodopsin (rho) (Myripristis violacea (Lattice soldierfish)).